Reading from the N-terminus, the 295-residue chain is CRISPR system Cmr endoribonuclease Cmr4 (295 aa).

This sequence belongs to the CRISPR system Cmr4 family. As to quaternary structure, forms oligomers in isolation. Part of the type III-B Cmr ribonucleoprotein (RNP) complex, an elongated RNP with Cmr2 and Cmr3 as the base, with Cmr4 and Cmr5 forming a helical core along the mature crRNA (39 or 45 nt in length), while the complex is capped by Cmr6 and Cmr1. The 5' end of the crRNA is bound to Cmr2 and Cmr3, while Cmr6 and a Cmr1 subunit (Cmr1-1 or Cmr1-2) cap the 3' end of the crRNA. The target RNA lies anti-parallel to the crRNA, with its 5' end near Cmr1 and Cmr6 and its 3' end near Cmr2 and Cmr3; major target RNA cleavage occurs nears the junction of Cmr1/Cmr6 and Cmr4/Cmr5, with minor cleavage occurring at 6 nt intervals which coincide with the proposed spacing of Cmr4 subunits. Interacts with Cmr5. Interacts with Cmr2, Cmr3, Cmr5 and Cmr6.

The protein localises to the cytoplasm. In terms of biological role, CRISPR (clustered regularly interspaced short palindromic repeat), is an adaptive immune system that provides protection against mobile genetic elements (viruses, transposable elements and conjugative plasmids). CRISPR clusters contain sequences complementary to antecedent mobile elements and target invading nucleic acids. CRISPR clusters are transcribed and processed into CRISPR RNA (crRNA), formerly called psiRNA (prokaryotic silencing) in this organism. Part of the Cmr ribonucleoprotein complex which has divalent cation-dependent endoribonuclease activity specific for ssRNA complementary to the crRNA (target RNA), generating 5' hydroxy- and 3' phosphate or 2'-3' cyclic phosphate termini. This is probably the subunit that cleaves the target RNA. Cmr complex does not cleave ssDNA complementary to the crRNA. Cleavage of target RNA is guided by the crRNA; substrate cleavage occurs a fixed distance (14 nt) from the 3' end of the crRNA. In vitro reconstitution shows Cmr1-2 and Cmr5 are not absolutely necessary for target cleavage. The protein is CRISPR system Cmr endoribonuclease Cmr4 of Pyrococcus furiosus (strain ATCC 43587 / DSM 3638 / JCM 8422 / Vc1).